The chain runs to 305 residues: Peroxisome biogenesis factor 2 (305 aa).

Topologically, residues 1 to 15 (MAAREESTQSANRVL) are peroxisomal matrix. Residues 16–42 (RISQLDALELNKALEQLVWSQFTQCFH) traverse the membrane as a helical segment. Over 43–48 (GFKPGL) the chain is Cytoplasmic. Residues 49-74 (LARFEPEVKAFLWLFLWRFTIYSKNA) form a helical membrane-spanning segment. At 75–98 (TVGQSVLNIQHKNDSSPNPVYQPP) the chain is on the peroxisomal matrix side. The helical transmembrane segment at 99-125 (SKNQKLLYAVCTIGGRWLEERCYDLFR) threads the bilayer. The Cytoplasmic segment spans residues 126 to 133 (NRHLASFG). The helical transmembrane segment at 134–160 (KAKQCMNFVVGLLKLGELMNFLIFLQK) threads the bilayer. Topologically, residues 161–187 (GKFATLTERLLGIHSVFCKPQNMREVG) are peroxisomal matrix. Residues 188 to 211 (FEYMNRELLWHGFAEFLIFLLPLI) traverse the membrane as a helical segment. The Cytoplasmic segment spans residues 212–305 (NIQKLKAKLS…GIQMSEVNAL (94 aa)). Zn(2+) contacts are provided by Cys244, Cys247, Cys259, His261, Cys264, Cys267, Cys280, and Cys283. The segment at 244–284 (CALCGEWPTMPHTIGCEHVFCYYCVKSSFLFDIYFTCPKCG) adopts an RING-type zinc-finger fold.

The protein belongs to the pex2/pex10/pex12 family. Component of the PEX2-PEX10-PEX12 retrotranslocation channel, composed of PEX2, PEX10 and PEX12. Forms intramolecular and intermolecular disulfide bonds in response to reactive oxygen species (ROS), promoting higher stability.

It localises to the peroxisome membrane. The enzyme catalyses [E2 ubiquitin-conjugating enzyme]-S-ubiquitinyl-L-cysteine + [acceptor protein]-L-cysteine = [E2 ubiquitin-conjugating enzyme]-L-cysteine + [acceptor protein]-S-ubiquitinyl-L-cysteine.. The catalysed reaction is S-ubiquitinyl-[E2 ubiquitin-conjugating enzyme]-L-cysteine + [acceptor protein]-L-lysine = [E2 ubiquitin-conjugating enzyme]-L-cysteine + N(6)-ubiquitinyl-[acceptor protein]-L-lysine.. Its pathway is protein modification; protein ubiquitination. In terms of biological role, E3 ubiquitin-protein ligase component of a retrotranslocation channel required for peroxisome organization by mediating export of the PEX5 receptor from peroxisomes to the cytosol, thereby promoting PEX5 recycling. The retrotranslocation channel is composed of PEX2, PEX10 and PEX12; each subunit contributing transmembrane segments that coassemble into an open channel that specifically allows the passage of PEX5 through the peroxisomal membrane. PEX2 also regulates peroxisome organization by acting as a E3 ubiquitin-protein ligase. PEX2 ubiquitinates PEX5 during its passage through the retrotranslocation channel: catalyzes monoubiquitination of PEX5 at 'Cys-11', a modification that acts as a signal for PEX5 extraction into the cytosol. Required for pexophagy in response to starvation by mediating ubiquitination of peroxisomal proteins, such as PEX5 and ABCD3/PMP70. Also involved in the response to reactive oxygen species (ROS) by mediating 'Lys-48'-linked polyubiquitination and subsequent degradation of PNPLA2/ATGL, thereby regulating lipolysis. This Mus musculus (Mouse) protein is Peroxisome biogenesis factor 2.